The chain runs to 65 residues: Hainantoxin-X.2 (65 aa).

The N-terminal stretch at 1–20 is a signal peptide; sequence MNVKILVLVAVLCLVVSTHA. Positions 21–37 are excised as a propeptide; sequence ERHSKTDMEDSPMIQER. Intrachain disulfides connect cysteine 39/cysteine 56, cysteine 46/cysteine 59, and cysteine 55/cysteine 64.

Belongs to the neurotoxin 36 family. 02 subfamily. Expressed by the venom gland.

Its subcellular location is the secreted. In terms of biological role, reversibly blocks N-type calcium channels (Cav2.2/CACNA1B) in rat dorsal root ganglion cells. Elicits no toxic symptoms in either vertebrates or invertebrates during a period of 48 hours post-injection, when it was assayed in vivo by direct injection into mice and cockroaches. This chain is Hainantoxin-X.2, found in Cyriopagopus hainanus (Chinese bird spider).